The chain runs to 286 residues: Aquaporin PIP1-1 (286 aa).

At Met1 the chain carries N-acetylmethionine. The disordered stretch occupies residues 1–34; that stretch reads MEGKEEDVRVGANKFPERQPIGTSAQSDKDYKEP. Over 1–54 the chain is Cytoplasmic; that stretch reads MEGKEEDVRVGANKFPERQPIGTSAQSDKDYKEPPPAPFFEPGELSSWSFWRAG. The helical transmembrane segment at 55 to 75 threads the bilayer; sequence IAEFIATFLFLYITVLTVMGV. Residues 76–91 are Extracellular-facing; sequence KRSPNMCASVGIQGIA. The chain crosses the membrane as a helical span at residues 92-112; that stretch reads WAFGGMIFALVYCTAGISGGH. The Cytoplasmic portion of the chain corresponds to 113 to 132; that stretch reads INPAVTFGLFLARKLSLTRA. The short motif at 114–116 is the NPA 1 element; the sequence is NPA. A helical membrane pass occupies residues 133–153; the sequence is LYYIVMQCLGAICGAGVVKGF. At 154 to 174 the chain is on the extracellular side; that stretch reads QPKQYQALGGGANTVAHGYTK. A helical transmembrane segment spans residues 175-195; that stretch reads GSGLGAEIIGTFVLVYTVFSA. Residues 196–208 lie on the Cytoplasmic side of the membrane; sequence TDAKRNARDSHVP. The chain crosses the membrane as a helical span at residues 209–229; that stretch reads ILAPLPIGFAVFLVHLATIPI. Over 230 to 256 the chain is Extracellular; sequence TGTGINPARSLGAAIIYNKDHSWDDHW. Positions 235–237 match the NPA 2 motif; it reads NPA. A helical membrane pass occupies residues 257-277; it reads VFWVGPFIGAALAALYHVVVI. The Cytoplasmic segment spans residues 278–286; sequence RAIPFKSRS. Ser284 is subject to Phosphoserine.

The protein belongs to the MIP/aquaporin (TC 1.A.8) family. PIP (TC 1.A.8.11) subfamily. In terms of tissue distribution, widely expressed. Expressed in roots, above ground and in flower buds.

The protein resides in the cell membrane. In terms of biological role, water channel required to facilitate the transport of water across cell membrane. Its function is impaired by Hg(2+). In Arabidopsis thaliana (Mouse-ear cress), this protein is Aquaporin PIP1-1 (PIP1-1).